Consider the following 142-residue polypeptide: Nucleoside diphosphate kinase (142 aa).

The ATP site is built by lysine 11, phenylalanine 59, arginine 87, threonine 93, arginine 104, and asparagine 114. Residue histidine 117 is the Pros-phosphohistidine intermediate of the active site.

The protein belongs to the NDK family. As to quaternary structure, homotetramer. Mg(2+) is required as a cofactor.

It is found in the cytoplasm. It carries out the reaction a 2'-deoxyribonucleoside 5'-diphosphate + ATP = a 2'-deoxyribonucleoside 5'-triphosphate + ADP. The catalysed reaction is a ribonucleoside 5'-diphosphate + ATP = a ribonucleoside 5'-triphosphate + ADP. Its function is as follows. Major role in the synthesis of nucleoside triphosphates other than ATP. The ATP gamma phosphate is transferred to the NDP beta phosphate via a ping-pong mechanism, using a phosphorylated active-site intermediate. The protein is Nucleoside diphosphate kinase of Aeromonas hydrophila subsp. hydrophila (strain ATCC 7966 / DSM 30187 / BCRC 13018 / CCUG 14551 / JCM 1027 / KCTC 2358 / NCIMB 9240 / NCTC 8049).